The sequence spans 1091 residues: ATP-dependent helicase/deoxyribonuclease subunit B (1091 aa).

It belongs to the helicase family. AddB/RexB type 2 subfamily. In terms of assembly, heterodimer of AddA and RexB. It depends on Mg(2+) as a cofactor.

In terms of biological role, the heterodimer acts as both an ATP-dependent DNA helicase and an ATP-dependent, dual-direction single-stranded exonuclease. Recognizes the chi site generating a DNA molecule suitable for the initiation of homologous recombination. This subunit has 5' -&gt; 3' nuclease activity but not helicase activity. This Streptococcus pneumoniae (strain Hungary19A-6) protein is ATP-dependent helicase/deoxyribonuclease subunit B.